The chain runs to 120 residues: Small ribosomal subunit protein bS6 (120 aa).

The span at Ser97–Thr112 shows a compositional bias: polar residues. The disordered stretch occupies residues Ser97 to Asn120.

Belongs to the bacterial ribosomal protein bS6 family.

Binds together with bS18 to 16S ribosomal RNA. The chain is Small ribosomal subunit protein bS6 from Rickettsia bellii (strain OSU 85-389).